The sequence spans 190 residues: MKLIIGLGNPEARYSNTRHNIGFEAVEALAAAFGAPFSKGKGKYLVAKIRHRGEQLMLVKPMTYMNLSGHAVVAAMNFHKALRSDILVICDDMNLPSGTLRLRSKGSAGGQNGLKHIIESLGSEEFARLRIGIGLEEKPQGGYSSFVLGKFSTDERNVMNRTLEVCTEAILDFAVNGISHAMNHYNKPVS.

Tyr-14 lines the tRNA pocket. The Proton acceptor role is filled by His-19. Residues Tyr-64, Asn-66, and Asn-112 each contribute to the tRNA site.

It belongs to the PTH family. Monomer.

Its subcellular location is the cytoplasm. The enzyme catalyses an N-acyl-L-alpha-aminoacyl-tRNA + H2O = an N-acyl-L-amino acid + a tRNA + H(+). In terms of biological role, hydrolyzes ribosome-free peptidyl-tRNAs (with 1 or more amino acids incorporated), which drop off the ribosome during protein synthesis, or as a result of ribosome stalling. Catalyzes the release of premature peptidyl moieties from peptidyl-tRNA molecules trapped in stalled 50S ribosomal subunits, and thus maintains levels of free tRNAs and 50S ribosomes. This Chlorobium phaeovibrioides (strain DSM 265 / 1930) (Prosthecochloris vibrioformis (strain DSM 265)) protein is Peptidyl-tRNA hydrolase.